We begin with the raw amino-acid sequence, 65 residues long: Large ribosomal subunit protein uL29 (65 aa).

Belongs to the universal ribosomal protein uL29 family.

The polypeptide is Large ribosomal subunit protein uL29 (rpmC) (Borreliella burgdorferi (strain ATCC 35210 / DSM 4680 / CIP 102532 / B31) (Borrelia burgdorferi)).